We begin with the raw amino-acid sequence, 434 residues long: Enolase (434 aa).

Position 167 (Q167) interacts with (2R)-2-phosphoglycerate. E209 acts as the Proton donor in catalysis. Mg(2+) contacts are provided by D246, E291, and D318. 4 residues coordinate (2R)-2-phosphoglycerate: K343, R372, S373, and K394. The active-site Proton acceptor is K343.

This sequence belongs to the enolase family. In terms of assembly, component of the RNA degradosome, a multiprotein complex involved in RNA processing and mRNA degradation. Mg(2+) is required as a cofactor.

It is found in the cytoplasm. The protein resides in the secreted. It localises to the cell surface. The catalysed reaction is (2R)-2-phosphoglycerate = phosphoenolpyruvate + H2O. It functions in the pathway carbohydrate degradation; glycolysis; pyruvate from D-glyceraldehyde 3-phosphate: step 4/5. Its function is as follows. Catalyzes the reversible conversion of 2-phosphoglycerate (2-PG) into phosphoenolpyruvate (PEP). It is essential for the degradation of carbohydrates via glycolysis. This Buchnera aphidicola subsp. Acyrthosiphon pisum (strain APS) (Acyrthosiphon pisum symbiotic bacterium) protein is Enolase.